Consider the following 63-residue polypeptide: UPF0434 protein Mmar10_2939 (63 aa).

It belongs to the UPF0434 family.

The polypeptide is UPF0434 protein Mmar10_2939 (Maricaulis maris (strain MCS10) (Caulobacter maris)).